Here is a 113-residue protein sequence, read N- to C-terminus: Large ribosomal subunit protein uL22 (113 aa).

It belongs to the universal ribosomal protein uL22 family. Part of the 50S ribosomal subunit.

In terms of biological role, this protein binds specifically to 23S rRNA; its binding is stimulated by other ribosomal proteins, e.g. L4, L17, and L20. It is important during the early stages of 50S assembly. It makes multiple contacts with different domains of the 23S rRNA in the assembled 50S subunit and ribosome. Its function is as follows. The globular domain of the protein is located near the polypeptide exit tunnel on the outside of the subunit, while an extended beta-hairpin is found that lines the wall of the exit tunnel in the center of the 70S ribosome. The polypeptide is Large ribosomal subunit protein uL22 (Desulforudis audaxviator (strain MP104C)).